A 630-amino-acid chain; its full sequence is ATP synthase subunit alpha (630 aa).

Residue 173-180 coordinates ATP; it reads GDRQTGKT. The disordered stretch occupies residues 592 to 630; sequence AGGASTAADEDGAGDDEEEAPAPKAKSKNAKSASKAKEK. Acidic residues predominate over residues 599-611; sequence ADEDGAGDDEEEA.

Belongs to the ATPase alpha/beta chains family. In terms of assembly, F-type ATPases have 2 components, CF(1) - the catalytic core - and CF(0) - the membrane proton channel. CF(1) has five subunits: alpha(3), beta(3), gamma(1), delta(1), epsilon(1). CF(0) has three main subunits: a(1), b(2) and c(9-12). The alpha and beta chains form an alternating ring which encloses part of the gamma chain. CF(1) is attached to CF(0) by a central stalk formed by the gamma and epsilon chains, while a peripheral stalk is formed by the delta and b chains.

The protein resides in the cell inner membrane. It carries out the reaction ATP + H2O + 4 H(+)(in) = ADP + phosphate + 5 H(+)(out). Functionally, produces ATP from ADP in the presence of a proton gradient across the membrane. The alpha chain is a regulatory subunit. This is ATP synthase subunit alpha from Sorangium cellulosum (strain So ce56) (Polyangium cellulosum (strain So ce56)).